A 425-amino-acid polypeptide reads, in one-letter code: Paired box pox-neuro protein (425 aa).

A DNA-binding region (paired) is located at residues 5-132; it reads GQAGVNQLGG…SSINRILRNS (128 aa). A PAI subdomain region spans residues 8–64; it reads GVNQLGGVFVNGRPLPDCVRRRIVDLALCGVRPCDISRQLLVSHGCVSKILTRFYET. The segment at 84-132 is RED subdomain; it reads TVVKKIIRLKEENSGMFAWEIREQLQQQRVCDPSSVPSISSINRILRNS. Disordered regions lie at residues 159 to 188, 297 to 358, and 383 to 425; these read QAGS…AATP, TKSE…RKRN, and LESS…EVVN. Positions 172-185 are enriched in pro residues; sequence APPPPVTVAPPTPA. 2 stretches are compositionally biased toward low complexity: residues 323-332 and 340-349; these read SSPAALSLTA and GSAPEASPGS. Residues 402 to 425 show a composition bias toward acidic residues; the sequence is TPEDEDPAEAEEEQEEEDSVEVVN.

As to expression, central and peripheral nervous systems.

It localises to the nucleus. In terms of biological role, transcriptional regulator that specifies poly-innervated organs (chemosensory bristle). Also controls the number of neurons. The protein is Paired box pox-neuro protein (Poxn) of Drosophila melanogaster (Fruit fly).